The chain runs to 312 residues: ADP-L-glycero-D-manno-heptose-6-epimerase (312 aa).

NADP(+)-binding positions include 10 to 11 (FI), 31 to 32 (DN), Lys38, Lys53, 75 to 79 (EGACS), and Asn92. The active-site Proton acceptor is the Tyr140. Residue Lys144 participates in NADP(+) binding. Asn169 contributes to the substrate binding site. Residues Val170 and Lys178 each contribute to the NADP(+) site. The Proton acceptor role is filled by Lys178. Substrate contacts are provided by residues Ser180, His187, 201–204 (FEGS), Arg209, and Tyr274.

The protein belongs to the NAD(P)-dependent epimerase/dehydratase family. HldD subfamily. In terms of assembly, homopentamer. Requires NADP(+) as cofactor.

The catalysed reaction is ADP-D-glycero-beta-D-manno-heptose = ADP-L-glycero-beta-D-manno-heptose. The protein operates within nucleotide-sugar biosynthesis; ADP-L-glycero-beta-D-manno-heptose biosynthesis; ADP-L-glycero-beta-D-manno-heptose from D-glycero-beta-D-manno-heptose 7-phosphate: step 4/4. Catalyzes the interconversion between ADP-D-glycero-beta-D-manno-heptose and ADP-L-glycero-beta-D-manno-heptose via an epimerization at carbon 6 of the heptose. This Proteus mirabilis (strain HI4320) protein is ADP-L-glycero-D-manno-heptose-6-epimerase.